A 694-amino-acid chain; its full sequence is DNA polymerase eta (694 aa).

Residues 9–258 form the UmuC domain; the sequence is VALVDMDCFF…MPIRKIRSLG (250 aa). D13 and M14 together coordinate Mg(2+). Positions 13 and 14 each coordinate Mn(2+). R61 provides a ligand contact to a 2'-deoxyribonucleoside 5'-triphosphate. The Mg(2+) site is built by D115 and E116. Residues D115 and E116 each coordinate Mn(2+). The active site involves E116. Residues 565-598 form a disordered region; the sequence is DSGPDDGAVKPVSSKAVSTEMNVAGDSPNVLDSP. Residues 609 to 643 form a UBZ3-type zinc finger; it reads ATEDQVLCEKCDSLVPVWDMPEHTDYHFALELQKS. C616, C619, H631, and H635 together coordinate Zn(2+). The tract at residues 651–694 is disordered; it reads KPQAIPAVSPQGKRNPKSPSASSSKRLRPHGMQTLESFFKPLTH. Residues K663, K667, and K675 each participate in a glycyl lysine isopeptide (Lys-Gly) (interchain with G-Cter in ubiquitin) cross-link. The PIP-box motif lies at 682–689; that stretch reads MQTLESFF. K690 is covalently cross-linked (Glycyl lysine isopeptide (Lys-Gly) (interchain with G-Cter in ubiquitin)).

It belongs to the DNA polymerase type-Y family. As to quaternary structure, interacts with REV1. Interacts with monoubiquitinated PCNA, but not unmodified PCNA. Interacts with POLI; this interaction targets POLI to the replication machinery. Interacts with PALB2 and BRCA2; the interactions are direct and are required to sustain the recruitment of POLH at blocked replication forks and to stimulate POLH-dependent DNA synthesis on D loop substrates. Interacts (via C-terminus) with TRAIP. Interacts with ubiquitin. Interacts with POLDIP2. Mg(2+) serves as cofactor. Requires Mn(2+) as cofactor. Monoubiquitinated by RCHY1/PIRH2. Ubiquitination depends on integrity of the UBZ3-type zinc finger domain and is enhanced by TRAIP. Ubiquitination inhibits the ability of PolH to interact with PCNA and to bypass UV-induced lesions. Ubiquitous.

It is found in the nucleus. It carries out the reaction DNA(n) + a 2'-deoxyribonucleoside 5'-triphosphate = DNA(n+1) + diphosphate. With respect to regulation, the enzyme in complex with the DNA substrate binds a third divalent metal cation. The binding of this third divalent cation, which is coordinated by water molecules and two oxygen atoms from DNA and dNTP, is essential for catalyzing the DNA synthesis. In terms of biological role, DNA polymerase specifically involved in the DNA repair by translesion synthesis (TLS). Due to low processivity on both damaged and normal DNA, cooperates with the heterotetrameric (REV3L, REV7, POLD2 and POLD3) POLZ complex for complete bypass of DNA lesions. Inserts one or 2 nucleotide(s) opposite the lesion, the primer is further extended by the tetrameric POLZ complex. In the case of 1,2-intrastrand d(GpG)-cisplatin cross-link, inserts dCTP opposite the 3' guanine. Particularly important for the repair of UV-induced pyrimidine dimers. Although inserts the correct base, may cause base transitions and transversions depending upon the context. May play a role in hypermutation at immunoglobulin genes. Forms a Schiff base with 5'-deoxyribose phosphate at abasic sites, but does not have any lyase activity, preventing the release of the 5'-deoxyribose phosphate (5'-dRP) residue. This covalent trapping of the enzyme by the 5'-dRP residue inhibits its DNA synthetic activity during base excision repair, thereby avoiding high incidence of mutagenesis. Targets POLI to replication foci. The protein is DNA polymerase eta (Polh) of Mus musculus (Mouse).